Consider the following 126-residue polypeptide: Small ribosomal subunit protein uS12 (126 aa).

3-methylthioaspartic acid is present on D89. The tract at residues 99-126 (RGSLDTSGVNDRKQGRSKYGTKKPKDKK) is disordered. The span at 113–126 (GRSKYGTKKPKDKK) shows a compositional bias: basic residues.

This sequence belongs to the universal ribosomal protein uS12 family. In terms of assembly, part of the 30S ribosomal subunit. Contacts proteins S8 and S17. May interact with IF1 in the 30S initiation complex.

In terms of biological role, with S4 and S5 plays an important role in translational accuracy. Functionally, interacts with and stabilizes bases of the 16S rRNA that are involved in tRNA selection in the A site and with the mRNA backbone. Located at the interface of the 30S and 50S subunits, it traverses the body of the 30S subunit contacting proteins on the other side and probably holding the rRNA structure together. The combined cluster of proteins S8, S12 and S17 appears to hold together the shoulder and platform of the 30S subunit. This Legionella pneumophila (strain Paris) protein is Small ribosomal subunit protein uS12.